The primary structure comprises 69 residues: Beta-defensin 1 (69 aa).

An N-terminal signal peptide occupies residues 1-21 (MKTHYFLLVMICFLFSQMEPG). A propeptide spanning residues 22–32 (VGILTSLGRRT) is cleaved from the precursor. Disulfide bonds link Cys37–Cys66, Cys44–Cys59, and Cys49–Cys67.

This sequence belongs to the beta-defensin family. In terms of assembly, monomer. Homodimer. As to expression, detected in kidney.

It localises to the secreted. It is found in the membrane. Its function is as follows. Has bactericidal activity. May act as a ligand for C-C chemokine receptor CCR6. Positively regulates the sperm motility and bactericidal activity in a CCR6-dependent manner. Binds to CCR6 and triggers Ca2+ mobilization in the sperm which is important for its motility. The chain is Beta-defensin 1 (Defb1) from Mus musculus (Mouse).